The sequence spans 105 residues: Pyrimidine/purine nucleoside phosphorylase (105 aa).

It belongs to the nucleoside phosphorylase PpnP family.

It catalyses the reaction a purine D-ribonucleoside + phosphate = a purine nucleobase + alpha-D-ribose 1-phosphate. The enzyme catalyses adenosine + phosphate = alpha-D-ribose 1-phosphate + adenine. The catalysed reaction is cytidine + phosphate = cytosine + alpha-D-ribose 1-phosphate. It carries out the reaction guanosine + phosphate = alpha-D-ribose 1-phosphate + guanine. It catalyses the reaction inosine + phosphate = alpha-D-ribose 1-phosphate + hypoxanthine. The enzyme catalyses thymidine + phosphate = 2-deoxy-alpha-D-ribose 1-phosphate + thymine. The catalysed reaction is uridine + phosphate = alpha-D-ribose 1-phosphate + uracil. It carries out the reaction xanthosine + phosphate = alpha-D-ribose 1-phosphate + xanthine. Functionally, catalyzes the phosphorolysis of diverse nucleosides, yielding D-ribose 1-phosphate and the respective free bases. Can use uridine, adenosine, guanosine, cytidine, thymidine, inosine and xanthosine as substrates. Also catalyzes the reverse reactions. This is Pyrimidine/purine nucleoside phosphorylase from Clostridioides difficile (strain 630) (Peptoclostridium difficile).